The sequence spans 250 residues: Sugar fermentation stimulation protein homolog (250 aa).

Belongs to the SfsA family.

The chain is Sugar fermentation stimulation protein homolog from Synechococcus sp. (strain CC9311).